The sequence spans 249 residues: Probable transcriptional regulatory protein Tfu_2096 (249 aa).

It belongs to the TACO1 family.

It localises to the cytoplasm. This is Probable transcriptional regulatory protein Tfu_2096 from Thermobifida fusca (strain YX).